The sequence spans 217 residues: Protein-L-isoaspartate O-methyltransferase (217 aa).

Ser61 is an active-site residue.

The protein belongs to the methyltransferase superfamily. L-isoaspartyl/D-aspartyl protein methyltransferase family.

The protein localises to the cytoplasm. The catalysed reaction is [protein]-L-isoaspartate + S-adenosyl-L-methionine = [protein]-L-isoaspartate alpha-methyl ester + S-adenosyl-L-homocysteine. Its function is as follows. Catalyzes the methyl esterification of L-isoaspartyl residues in peptides and proteins that result from spontaneous decomposition of normal L-aspartyl and L-asparaginyl residues. It plays a role in the repair and/or degradation of damaged proteins. The protein is Protein-L-isoaspartate O-methyltransferase of Syntrophotalea carbinolica (strain DSM 2380 / NBRC 103641 / GraBd1) (Pelobacter carbinolicus).